Reading from the N-terminus, the 493-residue chain is Sodium-coupled neutral amino acid symporter 2 (493 aa).

At 1–72 (MNNAEVLNVA…LPGTTSFGMS (72 aa)) the chain is on the cytoplasmic side. The tract at residues 1 to 92 (MNNAEVLNVA…SGILGLSYAM (92 aa)) is regulates protein turnover upon amino acid deprivation. The chain crosses the membrane as a helical span at residues 73–92 (VFNLSNAIVGSGILGLSYAM). Asparagine 78 lines the Na(+) pocket. Topologically, residues 93–98 (ANTGIA) are extracellular. Residues 99–119 (LFMILLVFVTVFSLYSIHLLL) traverse the membrane as a helical segment. At 120–154 (KTANEGGSLLYEQLGLKAFGIPGKLAASGSVTLQN) the chain is on the cytoplasmic side. The chain crosses the membrane as a helical span at residues 155–173 (IGAMSSYLYIVKYELPLVI). Topologically, residues 174-184 (KALMDIKESNG) are extracellular. Residues 185-205 (EWYLNGDYLVIMVSLAIILPL) traverse the membrane as a helical segment. Over 206–213 (SLLRNLGY) the chain is Cytoplasmic. The chain crosses the membrane as a helical span at residues 214–234 (LGYTSGFSPLCMVFFLIVVIY). Residues 235–279 (KKFEIPCPLEAMNMTSNSSSHDHMAHNETDDEMCKPKYFVFNSQT) are Extracellular-facing. A disulfide bond links cysteine 241 and cysteine 268. Asparagine 247, asparagine 251, and asparagine 261 each carry an N-linked (GlcNAc...) asparagine glycan. Residues 280–300 (VYAVPILTFSFVCHPAVLPIY) traverse the membrane as a helical segment. At 301-316 (QELKGRSRRRMMNVSN) the chain is on the cytoplasmic side. Residues 317–337 (VSFFAMFIMYLLAALFGYLTF) form a helical membrane-spanning segment. Residues 338–358 (YSKVEPELLHTYSKVFGAGVI) are Extracellular-facing. Residues 359–379 (FVVVRLAVLMAVTLTVPIVIF) form a helical membrane-spanning segment. Na(+) is bound at residue threonine 373. Residues 380–400 (PIRSSLNELFCSGKDFAWIRH) are Cytoplasmic-facing. Residues 401 to 421 (ILITFLILAFTNVLVIFVPTI) traverse the membrane as a helical segment. The Extracellular segment spans residues 422 to 423 (RD). A helical membrane pass occupies residues 424 to 444 (IFGFIGASAAAMLVFILPSAF). Residues 445-459 (YIRLVKKESMKSVQK) lie on the Cytoplasmic side of the membrane. A helical membrane pass occupies residues 460-482 (IGALLFLIGGIIVMIGSMTLIIL). The Extracellular segment spans residues 483 to 493 (DWIHNSTSGGN).

This sequence belongs to the amino acid/polyamine transporter 2 family.

The protein resides in the cell membrane. The enzyme catalyses L-alanine(in) + Na(+)(in) = L-alanine(out) + Na(+)(out). The catalysed reaction is glycine(in) + Na(+)(in) = glycine(out) + Na(+)(out). It carries out the reaction L-serine(in) + Na(+)(in) = L-serine(out) + Na(+)(out). It catalyses the reaction L-proline(in) + Na(+)(in) = L-proline(out) + Na(+)(out). The enzyme catalyses L-methionine(in) + Na(+)(in) = L-methionine(out) + Na(+)(out). The catalysed reaction is L-histidine(in) + Na(+)(in) = L-histidine(out) + Na(+)(out). It carries out the reaction L-asparagine(in) + Na(+)(in) = L-asparagine(out) + Na(+)(out). It catalyses the reaction L-glutamine(in) + Na(+)(in) = L-glutamine(out) + Na(+)(out). The enzyme catalyses L-threonine(in) + Na(+)(in) = L-threonine(out) + Na(+)(out). The catalysed reaction is L-leucine(in) + Na(+)(in) = L-leucine(out) + Na(+)(out). It carries out the reaction L-phenylalanine(in) + Na(+)(in) = L-phenylalanine(out) + Na(+)(out). Inhibited by N-methyl-D-glucamine. Inhibited by choline. Allosteric regulation of sodium ions binding by pH. In terms of biological role, symporter that cotransports neutral amino acids and sodium ions from the extracellular to the intracellular side of the cell membrane. The transport is pH-sensitive, Li(+)-intolerant, electrogenic, driven by the Na(+) electrochemical gradient and cotransports of neutral amino acids and sodium ions with a stoichiometry of 1:1. In Xenopus tropicalis (Western clawed frog), this protein is Sodium-coupled neutral amino acid symporter 2.